The sequence spans 616 residues: Dihydroxy-acid dehydratase (616 aa).

Asp-81 provides a ligand contact to Mg(2+). Cys-122 contributes to the [2Fe-2S] cluster binding site. 2 residues coordinate Mg(2+): Asp-123 and Lys-124. The residue at position 124 (Lys-124) is an N6-carboxylysine. Cys-195 contacts [2Fe-2S] cluster. Glu-491 lines the Mg(2+) pocket. Catalysis depends on Ser-517, which acts as the Proton acceptor.

It belongs to the IlvD/Edd family. As to quaternary structure, homodimer. [2Fe-2S] cluster serves as cofactor. The cofactor is Mg(2+).

It catalyses the reaction (2R)-2,3-dihydroxy-3-methylbutanoate = 3-methyl-2-oxobutanoate + H2O. The enzyme catalyses (2R,3R)-2,3-dihydroxy-3-methylpentanoate = (S)-3-methyl-2-oxopentanoate + H2O. The protein operates within amino-acid biosynthesis; L-isoleucine biosynthesis; L-isoleucine from 2-oxobutanoate: step 3/4. Its pathway is amino-acid biosynthesis; L-valine biosynthesis; L-valine from pyruvate: step 3/4. Functionally, functions in the biosynthesis of branched-chain amino acids. Catalyzes the dehydration of (2R,3R)-2,3-dihydroxy-3-methylpentanoate (2,3-dihydroxy-3-methylvalerate) into 2-oxo-3-methylpentanoate (2-oxo-3-methylvalerate) and of (2R)-2,3-dihydroxy-3-methylbutanoate (2,3-dihydroxyisovalerate) into 2-oxo-3-methylbutanoate (2-oxoisovalerate), the penultimate precursor to L-isoleucine and L-valine, respectively. The protein is Dihydroxy-acid dehydratase of Sodalis glossinidius (strain morsitans).